Reading from the N-terminus, the 119-residue chain is Ig heavy chain V region X44 (119 aa).

The Ig-like domain maps to 1-117 (EVKLLESGGG…WGQGTLVTVS (117 aa)).

The protein is Ig heavy chain V region X44 of Mus musculus (Mouse).